The primary structure comprises 1023 residues: 2-oxoglutarate dehydrogenase complex component E1 (1023 aa).

The N-terminal 40 residues, 1-40 (MFHLRTCAAKLRPLTASQTVKTFSQNKPAAIRTFQQIRCY), are a transit peptide targeting the mitochondrion. Lysine 74 is modified (N6-succinyllysine). Position 100 is a phosphoserine (serine 100). Ca(2+)-binding residues include histidine 143, aspartate 156, and aspartate 158. Arginine 312 is a thiamine diphosphate binding site. An N6-acetyllysine modification is found at lysine 401. Aspartate 411, asparagine 444, and isoleucine 446 together coordinate thiamine diphosphate. Mg(2+) is bound by residues aspartate 411, asparagine 444, and isoleucine 446. Residue lysine 534 forms a Glycyl lysine isopeptide (Lys-Gly) (interchain with G-Cter in ubiquitin) linkage. Lysine 564 bears the N6-succinyllysine mark. Glutamine 676 lines the thiamine diphosphate pocket. The recognized by alloreactive CD8 cytotoxic T-lymphocytes in association with a class I MHC protein stretch occupies residues 933-939 (LSPFPFD). Lysine 970 is subject to N6-acetyllysine.

This sequence belongs to the alpha-ketoglutarate dehydrogenase family. As to quaternary structure, homodimer. The 2-oxoglutarate dehydrogenase complex is composed of OGDH (2-oxoglutarate dehydrogenase; E1), DLST (dihydrolipoamide succinyltransferase; E2), DLD (dihydrolipoamide dehydrogenase; E3) and the assembly factor KGD4. It contains multiple copies of the three enzymatic components (E1, E2 and E3). In the nucleus, the 2-oxoglutarate dehydrogenase complex associates with KAT2A. Interacts with ABHD11; this interaction maintains the functional lipoylation of the 2-oxoglutarate dehydrogenase complex. Thiamine diphosphate is required as a cofactor. It depends on Mg(2+) as a cofactor.

It localises to the mitochondrion. Its subcellular location is the nucleus. The catalysed reaction is N(6)-[(R)-lipoyl]-L-lysyl-[protein] + 2-oxoglutarate + H(+) = N(6)-[(R)-S(8)-succinyldihydrolipoyl]-L-lysyl-[protein] + CO2. Calcium ions and ADP stimulate, whereas ATP and NADH reduce catalytic activity. 2-oxoglutarate dehydrogenase (E1o) component of the 2-oxoglutarate dehydrogenase complex (OGDHC). Participates in the first step, rate limiting for the overall conversion of 2-oxoglutarate to succinyl-CoA and CO(2) catalyzed by the whole OGDHC. Catalyzes the irreversible decarboxylation of 2-oxoglutarate (alpha-ketoglutarate) via the thiamine diphosphate (ThDP) cofactor and subsequent transfer of the decarboxylated acyl intermediate on an oxidized dihydrolipoyl group that is covalently amidated to the E2 enzyme (dihydrolipoyllysine-residue succinyltransferase or DLST). Plays a key role in the Krebs (citric acid) cycle, which is a common pathway for oxidation of fuel molecules, including carbohydrates, fatty acids, and amino acids. Can catalyze the decarboxylation of 2-oxoadipate in vitro, but at a much lower rate than 2-oxoglutarate. Mainly active in the mitochondrion. A fraction of the 2-oxoglutarate dehydrogenase complex also localizes in the nucleus and is required for lysine succinylation of histones: associates with KAT2A on chromatin and provides succinyl-CoA to histone succinyltransferase KAT2A. The chain is 2-oxoglutarate dehydrogenase complex component E1 from Mus musculus (Mouse).